The chain runs to 612 residues: Serine/threonine-protein kinase Nek1 (612 aa).

Positions 4–258 constitute a Protein kinase domain; sequence YEFLEQIGKG…ASDLLRHPHL (255 aa). ATP contacts are provided by residues 10–18 and Lys-33; that span reads IGKGSFGSA. The active-site Proton acceptor is the Asp-129. Over residues 503 to 513 the composition is skewed to polar residues; it reads ISDGSSSSDQN. Residues 503–534 form a disordered region; sequence ISDGSSSSDQNATAGASSHTTSSSSRRCRFDP. The span at 514 to 527 shows a compositional bias: low complexity; sequence ATAGASSHTTSSSS.

The protein belongs to the protein kinase superfamily. NEK Ser/Thr protein kinase family. NIMA subfamily.

The catalysed reaction is L-seryl-[protein] + ATP = O-phospho-L-seryl-[protein] + ADP + H(+). It catalyses the reaction L-threonyl-[protein] + ATP = O-phospho-L-threonyl-[protein] + ADP + H(+). In terms of biological role, may be involved in plant development processes. This chain is Serine/threonine-protein kinase Nek1 (NEK1), found in Arabidopsis thaliana (Mouse-ear cress).